A 275-amino-acid chain; its full sequence is MEPLPGWGSAPWSQAPTDNTFRLVPCVFLLNLLQRISAQPSCRQEEFLVGDECCPMCNPGYHVKQVCSEHTGTVCAPCPPQTYTAHANGLSKCLPCGVCDPDMGLLTWQECSSWKDTVCRCIPGYFCENQDGSHCSTCLQHTTCPPGQRVEKRGTHDQDTVCADCLTGTFSLGGTQEECLPWTNCSAFQQEVRRGTNSTDTTCSSQVVYYVVSILLPLVIVGAGIAGFLICTRRHLHTSSVAKELEPFQEQQENTIRFPVTEVGFAETEEETASN.

The first 38 residues, M1–A38, serve as a signal peptide directing secretion. 3 TNFR-Cys repeats span residues S41–C75, P77–C119, and R120–C162. 8 disulfide bridges follow: C42–C53, C54–C67, C57–C75, C78–C93, C96–C111, C99–C119, C121–C138, and C144–C162. N-linked (GlcNAc...) asparagine glycans are attached at residues N184 and N197. Residues V211–C231 traverse the membrane as a helical segment.

The protein belongs to the tumor necrosis factor receptor superfamily. Interacts with TRAF2, TRAF3 and TRAF5. Interacts (via CRD1/TNFR-Cys 1) with CD160; this interaction is direct. Interacts (via CRD1/TNFR-Cys 1) with BTLA; this interaction is direct. Post-translationally, N-glycosylated. Expressed at mucosal sites including colon and pulmonary epithelial cells. Expressed in naive T cells.

The protein resides in the cell membrane. Functionally, receptor for four distinct ligands: The TNF superfamily members TNFSF14/LIGHT and homotrimeric LTA/lymphotoxin-alpha and the immunoglobulin superfamily members BTLA and CD160, altogether defining a complex stimulatory and inhibitory signaling network. Signals via the TRAF2-TRAF3 E3 ligase pathway to promote immune cell survival and differentiation. Participates in bidirectional cell-cell contact signaling between antigen presenting cells and lymphocytes. In response to ligation of TNFSF14/LIGHT, delivers costimulatory signals to T cells, promoting cell proliferation and effector functions. Interacts with CD160 on NK cells, enhancing IFNG production and anti-tumor immune response. In the context of bacterial infection, acts as a signaling receptor on epithelial cells for CD160 from intraepithelial lymphocytes, triggering the production of antimicrobial proteins and pro-inflammatory cytokines. Upon binding to CD160 on activated CD4+ T cells, down-regulates CD28 costimulatory signaling, restricting memory and alloantigen-specific immune response. May interact in cis (on the same cell) or in trans (on other cells) with BTLA. In cis interactions, appears to play an immune regulatory role inhibiting in trans interactions in naive T cells to maintain a resting state. In trans interactions, can predominate during adaptive immune response to provide survival signals to effector T cells. The polypeptide is Tumor necrosis factor receptor superfamily member 14 (Mus musculus (Mouse)).